We begin with the raw amino-acid sequence, 334 residues long: Serine racemase (334 aa).

E13 lines the Mg(2+) pocket. ATP-binding residues include S31, S32, I33, K51, and T52. Residues K56 and S84 each act as proton acceptor in the active site. Position 56 is an N6-(pyridoxal phosphate)lysine (K56). N86 is a pyridoxal 5'-phosphate binding site. Residue Q89 participates in ATP binding. C113 is modified (S-nitrosocysteine). Y121 is a binding site for ATP. Pyridoxal 5'-phosphate is bound at residue N154. D178 contributes to the Mg(2+) binding site. Residues G185, G186, G187, G188, and M189 each contribute to the pyridoxal 5'-phosphate site. E210, A214, D216, and N247 together coordinate Mg(2+). E210, A214, D216, and N247 together coordinate Ca(2+). E210, A214, and D216 together coordinate Mn(2+). K279 provides a ligand contact to ATP. S313 is a binding site for pyridoxal 5'-phosphate. N316 provides a ligand contact to ATP.

Belongs to the serine/threonine dehydratase family. As to quaternary structure, homodimer. It depends on Mg(2+) as a cofactor. Mn(2+) is required as a cofactor. Requires Ca(2+) as cofactor. The cofactor is pyridoxal 5'-phosphate. In terms of processing, S-nitrosylated, leading to decrease the enzyme activity.

The enzyme catalyses L-serine = D-serine. The catalysed reaction is L-serine = pyruvate + NH4(+). It carries out the reaction D-serine = pyruvate + NH4(+). Catalyzes the synthesis of D-serine from L-serine. D-serine is a key coagonist with glutamate at NMDA receptors. Has dehydratase activity towards both L-serine and D-serine. This chain is Serine racemase (SRR), found in Bos taurus (Bovine).